A 103-amino-acid polypeptide reads, in one-letter code: Large ribosomal subunit protein bL21 (103 aa).

The span at 83–92 (YRRKKGHRQP) shows a compositional bias: basic residues. The segment at 83–103 (YRRKKGHRQPFSRVTVEKIEA) is disordered.

The protein belongs to the bacterial ribosomal protein bL21 family. Part of the 50S ribosomal subunit. Contacts protein L20.

Functionally, this protein binds to 23S rRNA in the presence of protein L20. In Pelotomaculum thermopropionicum (strain DSM 13744 / JCM 10971 / SI), this protein is Large ribosomal subunit protein bL21.